The primary structure comprises 104 residues: L-rhamnose mutarotase (104 aa).

Position 18 (Tyr-18) interacts with substrate. The Proton donor role is filled by His-22. Substrate-binding positions include Tyr-41 and 76 to 77 (WW).

Belongs to the rhamnose mutarotase family. In terms of assembly, homodimer.

It localises to the cytoplasm. It catalyses the reaction alpha-L-rhamnose = beta-L-rhamnose. It functions in the pathway carbohydrate metabolism; L-rhamnose metabolism. In terms of biological role, involved in the anomeric conversion of L-rhamnose. The protein is L-rhamnose mutarotase of Salmonella arizonae (strain ATCC BAA-731 / CDC346-86 / RSK2980).